We begin with the raw amino-acid sequence, 1021 residues long: MTKEKPSSTRVAKTQALDDLIMGTNSSSIVSKRSVERLYYPNELHFFRYFVNKFQRRAPLINRGYWLRLRAIDVIVRQFITTPEPGRRKVVINLGAGSDVLPWQSYHRYGDSCGDTLFIDVDYPDLMRKKRAIVLGTPQLSELLGEDPYVSEKETDHLLLRSDKYCQVGCDLRELETLRKCLESFLPLFECSVLFVAEVSVTYMDTISADALIQWASYIGQAEFCLLEQILPHGPDHPFASTMLKHFNKLNTSLKSVHQYPTVNSQRSRFEKRGWNSVDVWDLWEAWNSEVFLNSSERAALDDVEPFDEWEEFILFARHYIVLHATSYHRGGKGAGQQMLASPPGKHVKANMVATKSLGAPKRRFGSPLVASSPEGGQYLVHTLGMGINARLDSCDIYSIQESSTSLEMAPVGPSARICHTTTDLGQGDLLLVGGRASPSKAFSDCWVLKKSSNSWEKTFDLPVPLFRHSTVNLPGSSLALVLGGKTGPSEISSDYFIFHPVRGWLKCAVSGVSPNSTFGAFAIASTSLGSKNGHFEGLLAGGIDGEGKINNQAYFWTVDVTTHEPIIHFESVQNYDQHSWALSVFGAQTANIESLSFVCGGVGQDPSSQGQSMACLTVKGKSLAVHLVDLGEKAGQLPFMVGSATVSSGSQLVIVGGGATCFSMGTFWDTGVYKIDLEGVVSEMIPGRTIHNKPVVVGYQNSPKLTQPTTDGVYPGPQSNAFITAIPKIKLQSKSDFEKLVQNRKPVIIEGLDLGGCVEKWNSEYVIQSVGETKEVVVHECQTSTGKMDFNSKNFRYVTESFSSFMTKAARGEALYLRALSEEKPTEAPANLAEDFPGLADDFRLPEELGSVKDRMFSSVLRISGRANMWLHYDVMANVYTQIQGSKRMVLFPPTDVSHLAFAPGASSSSLDIFSALDTHQLASTNPHEAFLNPGDLLFIPAMWFHTASPVTDLSVAVNVFFRDLESGYSTGRDVYGNRDLAAYEKGRQDISRITKSFDRLPSEIRQFYLRRLADELLHE.

S-adenosyl-L-methionine contacts are provided by residues R68, D122, 171-172 (DL), and E198. The region spanning 826–980 (PTEAPANLAE…STGRDVYGNR (155 aa)) is the JmjC domain.

This sequence belongs to the methyltransferase superfamily. LCMT family.

It catalyses the reaction 7-[(3S)-3-amino-3-carboxypropyl]wyosine(37) in tRNA(Phe) + S-adenosyl-L-methionine = 7-[(3S)-(3-amino-3-methoxycarbonyl)propyl]wyosine(37) in tRNA(Phe) + S-adenosyl-L-homocysteine. The catalysed reaction is 7-[(3S)-(3-amino-3-methoxycarbonyl)propyl]wyosine(37) in tRNA(Phe) + S-adenosyl-L-methionine + CO2 = wybutosine(37) in tRNA(Phe) + S-adenosyl-L-homocysteine + 2 H(+). It functions in the pathway tRNA modification; wybutosine-tRNA(Phe) biosynthesis. Functionally, probable S-adenosyl-L-methionine-dependent methyltransferase that acts as a component of the wybutosine biosynthesis pathway. Wybutosine is a hyper modified guanosine with a tricyclic base found at the 3'-position adjacent to the anticodon of eukaryotic phenylalanine tRNA. May methylate the carboxyl group of leucine residues to form alpha-leucine ester residues. The sequence is that of tRNA wybutosine-synthesizing protein 4 (PPM2) from Gibberella zeae (strain ATCC MYA-4620 / CBS 123657 / FGSC 9075 / NRRL 31084 / PH-1) (Wheat head blight fungus).